The primary structure comprises 259 residues: V-type proton ATPase subunit D (259 aa).

The tract at residues 214–259 is disordered; sequence KLKEQEAAQRALEGPPKEEAGGTHSENQPPRNLLAVEEDNLPVLFN.

This sequence belongs to the V-ATPase D subunit family. In terms of assembly, V-ATPase is a heteromultimeric enzyme made up of two complexes: the ATP-hydrolytic V1 complex and the proton translocation V0 complex. The V1 complex consists of three catalytic AB heterodimers that form a heterohexamer, three peripheral stalks each consisting of EG heterodimers, one central rotor including subunits D and F, and the regulatory subunits C and H. The proton translocation complex V0 consists of the proton transport subunit a, a ring of proteolipid subunits c9c'', rotary subunit d, and The proton translocation complex V0 consists of the proton transport subunit a, a ring of proteolipid subunits c9c'', rotary subunit d, subunits e and f, and the accessory subunits vah-19/Ac45 and vah-20/PRR.

Its function is as follows. Subunit of the V1 complex of vacuolar(H+)-ATPase (V-ATPase), a multisubunit enzyme composed of a peripheral complex (V1) that hydrolyzes ATP and a membrane integral complex (V0) that translocates protons. V-ATPase is responsible for acidifying and maintaining the pH of intracellular compartments and in some cell types, is targeted to the plasma membrane, where it is responsible for acidifying the extracellular environment. The chain is V-type proton ATPase subunit D from Caenorhabditis briggsae.